The chain runs to 104 residues: DNA-directed RNA polymerase subunit Rpo13 (104 aa).

Disordered regions lie at residues Met-1–Pro-34 and Glu-76–Gly-104. Acidic residues predominate over residues Thr-7–Glu-31. DNA is bound at residue Glu-32. Over residues Ser-80 to Gly-104 the composition is skewed to basic residues. A required to bind DNA region spans residues Arg-81–Gly-104.

This sequence belongs to the archaeal Rpo13 RNA polymerase subunit family. Part of the 13-subunit RNA polymerase complex. Rpo1N and Rpo5 form a cleft which docks Rpo13. Forms predominantly dimers in solution, although monomers and trimers can also be seen. Found associated with RNAP but also as a homodimer pool in the cytoplasm in vivo.

It localises to the cytoplasm. It carries out the reaction RNA(n) + a ribonucleoside 5'-triphosphate = RNA(n+1) + diphosphate. DNA-dependent RNA polymerase (RNAP) catalyzes the transcription of DNA into RNA using the four ribonucleoside triphosphates as substrates. A molten-globule protein, it binds dsDNA in the RNAP, in vitro binds dsDNA but not ssDNA. Its position in RNAP implies it functions in both transcription initiation and elongation. The sequence is that of DNA-directed RNA polymerase subunit Rpo13 from Saccharolobus shibatae (strain ATCC 51178 / DSM 5389 / JCM 8931 / NBRC 15437 / B12) (Sulfolobus shibatae).